The primary structure comprises 544 residues: MTDNTDMEKLDRATTPTPIPNEAPPTSEPSESKPEEAEDESKYPHGLKLAAIILSNMVAMFLVALDRTIIATAIPRITDDFNALGDISWYASAYLITSSATQLLWGRIFTFYPTKTVYLVAIFFFELGSLLCGVAPNSVAFIIGRAIAGAGSAGIYSGSTILITTVTPLSKRAGYVGMMGAVFGIASVIAPLIGGAFTDHVTWRWCFYINLPVGGAAVACLILLFPKFPVNEPVSVKQQIKQLDPWGNLVFLPGVICLILALQWGGEKYAWDSGRIVALLVLACVLLLVFIGIQIWQQENATVPPRLFKIRNVWLGTIFAFCLGSVLIVFLIALPIWFQGIRGTDAITSGIDTLPLVLSLVFGAIVSGGVINGVGWFNPVFFSSVIFMSVGGGLITTFVVDTPTRTWIGYQIILGLGIGQGMQLASLGTQVAVKQSDVPTGVSLMFFAQSLGGSVLVCVAQAVFNNELRSRLTSFDGIDVARIIGTGATQLRHVIPADRLAEVLVEYNAALRSYFYVGLAAACFAVLPSLGIEWKNVKGQEFVH.

A compositionally biased stretch (basic and acidic residues) spans 1 to 12; that stretch reads MTDNTDMEKLDR. Residues 1-42 are disordered; that stretch reads MTDNTDMEKLDRATTPTPIPNEAPPTSEPSESKPEEAEDESK. The segment covering 17–27 has biased composition (pro residues); it reads TPIPNEAPPTS. Basic and acidic residues predominate over residues 30-42; it reads SESKPEEAEDESK. Helical transmembrane passes span 45–65, 89–111, 116–136, 146–166, 177–197, 205–225, 246–266, and 276–296; these read HGLKLAAIILSNMVAMFLVAL, WYASAYLITSSATQLLWGRIFTF, TVYLVAIFFFELGSLLCGVAP, AIAGAGSAGIYSGSTILITTV, GMMGAVFGIASVIAPLIGGAF, WCFYINLPVGGAAVACLILLF, WGNLVFLPGVICLILALQWGG, and IVALLVLACVLLLVFIGIQIW. N-linked (GlcNAc...) asparagine glycosylation occurs at Asn-300. 6 helical membrane passes run 318–338, 357–377, 380–400, 407–427, 444–464, and 514–534; these read IFAFCLGSVLIVFLIALPIWF, VLSLVFGAIVSGGVINGVGWF, VFFSSVIFMSVGGGLITTFVV, WIGYQIILGLGIGQGMQLASL, LMFFAQSLGGSVLVCVAQAVF, and YFYVGLAAACFAVLPSLGIEW.

It belongs to the major facilitator superfamily. TCR/Tet family.

It is found in the cell membrane. The protein operates within pigment biosynthesis. Rubrofusarin-specific efflux pump; part of the gene cluster that mediates the biosynthesis of aurofusarin, a red mycelium pigment which is acting as a mycotoxin. The first step is performed by the polyketide synthase which condenses one acetyl-CoA and 6 malonyl-CoA units to form the first intermediate, the cyclic heptaketide and yellow pigment YWA1. The C2 hydroxyl group in the pyrone ring of YWA1 is probably formed during ring closure by an aldol-type cyclization reaction. The dehydratase aurZ then acts as the first tailoring enzyme in the aurofusarin biosynthetic pathway by converting YWA1 to nor-rubrofusarin. Nor-rubrofusarin is then methylated to rubrofusarin by the O-methyltransferase aurJ. Rubrofusarin is then transported across the plasma membrane by the rubrofusarin-specific pump aurT for further enzymatic processing by the extracellular complex composed of GIP1, aurF, aurO and aurS to yield aurofusarin. The polypeptide is Rubrofusarin-specific efflux pump aurT (Gibberella zeae (strain ATCC MYA-4620 / CBS 123657 / FGSC 9075 / NRRL 31084 / PH-1) (Wheat head blight fungus)).